The sequence spans 258 residues: L-2,3-butanediol dehydrogenase (258 aa).

NAD(+) is bound by residues 12–14 (QGI), Asp33, Gln37, 61–62 (DV), Asn88, Tyr154, Lys158, and 184–189 (PGIVGT). Tyr154 functions as the Proton acceptor in the catalytic mechanism.

This sequence belongs to the short-chain dehydrogenases/reductases (SDR) family. As to quaternary structure, homotetramer.

It carries out the reaction (S,S)-butane-2,3-diol + NAD(+) = (S)-acetoin + NADH + H(+). The enzyme catalyses (S)-acetoin + NAD(+) = diacetyl + NADH + H(+). Its activity is regulated as follows. Slightly activated by Ba(2+), Ca(2+), Mn(2+), Mg(2+), and Co(2+), while Hg(2+) and Cu(2+) cause marked inhibition of the activity. Ni(2+), Zn(2+) and Cd(2+) have no effect on the catalytic activity. Is also slightly inhibited by lactate, pyruvate, succinate, acetate and formate. Catalyzes the reversible reduction of (S)-acetoin to (S,S)-butane-2,3-diol (L-BD) in the presence of NADH. To a lesser extent, can also catalyze the irreversible reduction of diacetyl to (S)-acetoin. Cannot oxidize meso-BD, D-BD, 2-butanol, 1,2-propanediol, ethanol, acetol, 1,2-butanediol, 1,3-butanediol, n-butanol, and n-propanol. Cannot reduce (R)-acetoin, acetol, dihydroxyacetone and 2,4-pentanedione. This is L-2,3-butanediol dehydrogenase from Corynebacterium glutamicum (Brevibacterium saccharolyticum).